Reading from the N-terminus, the 617-residue chain is KIF-binding protein (617 aa).

Residues 48–83 (ALLGPAPEDEDEPAADDGPGDQALGAGEPREAEGPG) form a disordered region. Positions 54 to 66 (PEDEDEPAADDGP) are enriched in acidic residues. Position 174 is a phosphoserine (Ser174).

It belongs to the KIF-binding protein family. Interacts with KIF1B; positively regulates KIF1B microtubule motor activity. Interacts with STMN2. In terms of tissue distribution, in the embryo it is expressed in cortical neurons; expression increases during neuronal development.

Its subcellular location is the cytoplasm. The protein localises to the cytoskeleton. Its function is as follows. Activator of KIF1B plus-end-directed microtubule motor activity. Required for organization of axonal microtubules, and axonal outgrowth and maintenance during peripheral and central nervous system development. The polypeptide is KIF-binding protein (Mus musculus (Mouse)).